A 432-amino-acid chain; its full sequence is D-amino acid dehydrogenase (432 aa).

3–17 provides a ligand contact to FAD; it reads VVVLGSGVVGVASAW.

This sequence belongs to the DadA oxidoreductase family. It depends on FAD as a cofactor.

The catalysed reaction is a D-alpha-amino acid + A + H2O = a 2-oxocarboxylate + AH2 + NH4(+). Its pathway is amino-acid degradation; D-alanine degradation; NH(3) and pyruvate from D-alanine: step 1/1. Functionally, oxidative deamination of D-amino acids. The polypeptide is D-amino acid dehydrogenase (Cronobacter sakazakii (strain ATCC BAA-894) (Enterobacter sakazakii)).